The following is a 149-amino-acid chain: Calmodulin-6 (149 aa).

EF-hand domains lie at 8–43 (DQISEFKEAFSLFDKDGDGCITTKELGTVMRSLGQN), 44–79 (PTEAELQDMINEVDADGNGTIDFPEFLNLMARKMKD), 81–116 (DSEEELKEAFRVFDKDQNGFISAAELRHVMTNLGEK), and 117–149 (LSDEEVDEMIREADVDGDGQINYEEFVKVMMAK). D21, D23, D25, C27, E32, D57, D59, N61, T63, E68, D94, D96, N98, E105, D130, D132, D134, Q136, and E141 together coordinate Ca(2+).

The protein belongs to the calmodulin family. In terms of assembly, interacts with KCBP.

Its function is as follows. Calmodulin mediates the control of a large number of enzymes, ion channels and other proteins by Ca(2+). Among the enzymes to be stimulated by the calmodulin-Ca(2+) complex are a number of protein kinases and phosphatases. This is Calmodulin-6 (CAM6) from Arabidopsis thaliana (Mouse-ear cress).